Consider the following 419-residue polypeptide: Glutamyl-tRNA reductase (419 aa).

Substrate is bound by residues 49–52, Ser107, 112–114, and Gln118; these read TCNR and EPQ. Cys50 functions as the Nucleophile in the catalytic mechanism. 187–192 serves as a coordination point for NADP(+); that stretch reads GAGETI.

Belongs to the glutamyl-tRNA reductase family. As to quaternary structure, homodimer.

It carries out the reaction (S)-4-amino-5-oxopentanoate + tRNA(Glu) + NADP(+) = L-glutamyl-tRNA(Glu) + NADPH + H(+). It participates in porphyrin-containing compound metabolism; protoporphyrin-IX biosynthesis; 5-aminolevulinate from L-glutamyl-tRNA(Glu): step 1/2. Catalyzes the NADPH-dependent reduction of glutamyl-tRNA(Glu) to glutamate 1-semialdehyde (GSA). In Psychromonas ingrahamii (strain DSM 17664 / CCUG 51855 / 37), this protein is Glutamyl-tRNA reductase.